The primary structure comprises 131 residues: Small ribosomal subunit protein uS8 (131 aa).

Belongs to the universal ribosomal protein uS8 family. Part of the 30S ribosomal subunit. Contacts proteins S5 and S12.

One of the primary rRNA binding proteins, it binds directly to 16S rRNA central domain where it helps coordinate assembly of the platform of the 30S subunit. This is Small ribosomal subunit protein uS8 from Paracidovorax citrulli (strain AAC00-1) (Acidovorax citrulli).